The sequence spans 291 residues: Nitrogenase iron protein (291 aa).

Residue 11-18 participates in ATP binding; that stretch reads GKGGIGKS. Cysteine 99 serves as a coordination point for [4Fe-4S] cluster. Arginine 102 bears the ADP-ribosylarginine; by dinitrogenase reductase ADP-ribosyltransferase mark. Cysteine 133 provides a ligand contact to [4Fe-4S] cluster.

This sequence belongs to the NifH/BchL/ChlL family. As to quaternary structure, homodimer. The cofactor is [4Fe-4S] cluster. The reversible ADP-ribosylation of Arg-102 inactivates the nitrogenase reductase and regulates nitrogenase activity.

It carries out the reaction N2 + 8 reduced [2Fe-2S]-[ferredoxin] + 16 ATP + 16 H2O = H2 + 8 oxidized [2Fe-2S]-[ferredoxin] + 2 NH4(+) + 16 ADP + 16 phosphate + 6 H(+). The key enzymatic reactions in nitrogen fixation are catalyzed by the nitrogenase complex, which has 2 components: the iron protein and the molybdenum-iron protein. This Cereibacter sphaeroides (strain ATCC 17023 / DSM 158 / JCM 6121 / CCUG 31486 / LMG 2827 / NBRC 12203 / NCIMB 8253 / ATH 2.4.1.) (Rhodobacter sphaeroides) protein is Nitrogenase iron protein.